A 263-amino-acid chain; its full sequence is Glutamate racemase (263 aa).

Substrate contacts are provided by residues D13–S14 and Y45–G46. C77 serves as the catalytic Proton donor/acceptor. A substrate-binding site is contributed by N78–T79. C185 functions as the Proton donor/acceptor in the catalytic mechanism. Residue T186–H187 participates in substrate binding.

It belongs to the aspartate/glutamate racemases family.

It catalyses the reaction L-glutamate = D-glutamate. It participates in cell wall biogenesis; peptidoglycan biosynthesis. In terms of biological role, provides the (R)-glutamate required for cell wall biosynthesis. The chain is Glutamate racemase from Vibrio vulnificus (strain YJ016).